Reading from the N-terminus, the 493-residue chain is MNHILAIDQGTTSSRAMVFDEALTLKSVAQEEFPQIYPRPGWVEHDPSDLWSSVAATARAAVERAEIDGSLAAIGITNQRETVVVWERASGHPIHNAIVWQDRRTADLCHALAEAGHEPTITERTGLLLDPYFSATKLKWLLDHVEGARARARRGELLFGTVDSYLIWKLTGGRAHVTDATNAARTMLFDIGRGIWDPEICGLLDIPMEMLPEVKDCAALFGMTRADLFGREIPILGVAGDQQAATCGQACFRPGMMKSTYGTGCFALLNTGEERVTSRARLLTTIAYQLGGKRTYALEGSIFIAGAVVQWLRDGLKIIREAGETQGLALSSDAAQDLVIVPAFTGLGAPWWKPESRGAVFGLTRNSGPAEFARAALESVGYQTRDLLEAMRADWAAGAEGVLRVDGGMAASDWSMQFLADIIGAPVDRPVVRETTALGVAWLAGMQAGLCPGPEEFAADWALERRFEPQMEASVREAKYDRWGRAVRAVMAV.

Thr-11 provides a ligand contact to ADP. The ATP site is built by Thr-11, Thr-12, and Ser-13. A sn-glycerol 3-phosphate-binding site is contributed by Thr-11. Arg-15 is an ADP binding site. Sn-glycerol 3-phosphate is bound by residues Arg-80, Glu-81, Tyr-132, and Asp-241. Residues Arg-80, Glu-81, Tyr-132, Asp-241, and Gln-242 each contribute to the glycerol site. ADP is bound by residues Thr-263 and Gly-306. ATP is bound by residues Thr-263, Gly-306, Gln-310, and Gly-408. Gly-408 serves as a coordination point for ADP.

It belongs to the FGGY kinase family.

The catalysed reaction is glycerol + ATP = sn-glycerol 3-phosphate + ADP + H(+). It functions in the pathway polyol metabolism; glycerol degradation via glycerol kinase pathway; sn-glycerol 3-phosphate from glycerol: step 1/1. Inhibited by fructose 1,6-bisphosphate (FBP). Key enzyme in the regulation of glycerol uptake and metabolism. Catalyzes the phosphorylation of glycerol to yield sn-glycerol 3-phosphate. The chain is Glycerol kinase from Cereibacter sphaeroides (strain KD131 / KCTC 12085) (Rhodobacter sphaeroides).